A 1320-amino-acid polypeptide reads, in one-letter code: MNSNRTSSSHNSRNLKILNASFDVPRPPGGGNSPLPSQGRSVRELEEQMSALRKENFNLKLRIYFLEEGQPGARADSSTESLSKQLIDAKIEIATLRKTVDVKMELLKDAARAISHHEELQRKADIDSQAIIDELQEQIHAYQMAESGGQPVENIAKTRKMLRLESEVQRLEEELVNIEARNVAARNELEFMLAERLESLTACEGKIQELAIKNSELVERLEKETASAESSNEAIDSLKVELEACRKENQDLVTSIRTLKHDMKRQVRSMKEAANTMDVQRQSILLLEATIKRKEKSCGSMQKNVLNYEALIAKLNAELETMRQQNVYFRELSENLQQKEVRQLDRGVAIVQPMRMTADAGRFVWQSGTIVAQEPLPLERQSAAATSNVSVSAVRLSSGPPPDQTYPVNGHDRAKYGLLQLFAAKLDWISAVPLALGHLALKIILLAMRLHSCLQNVHIPLRANRDLGAQLADKICELQEAQEKLKERERIHEQACRTIQKLMQKLSSQEKEIKKLNQENEQSANKENDCAKTVISPSSSGRSMSDNEASSQEMSTNLRVRYELKINEQEEKIKQLQTEVKKKTANLQNLVNKELWEKNREVERLTKLLANQQKTLPQISEESAGEADLQQSFTEAEYMRALERNKLLQRKVDVLFQRLADDQQNSAVIGQLRLELQQARTEVETADKWRLECVDVCSVLTNRLEELAGFLNSLLKHKDVLGVLAADRRNAMRKAVDRSLDLSKSLNMTLNITATSLADQSLAQLCNLSEILYTEGDASHKTFNSHEELHAATSMAPTVENLKAENKALKKELEKRRSSEGQRKERRSLPLPSQQFDNQSESEAWSEPDRKVSLARIGLDETSNSLAAPEQAISESESEGRTCATRQDRNRNSERIAQLEEQIAQKDERMLNVQCQMVELDNRYKQEQLRCLDITQQLEQLRAINEALTADLHAIGSHEEERMVELQRQLELKNQQIDQLKLAHSTLTADSQITEMELQALQQQMQEIEQLHADSVETLQSQLQKLKLDAVQQLEEHERLHREALERDWVALTTYQEQAQQLLELQRSLDYHQENEKELKQTLVENELATRALKKQLDESTLQASKAVMERTKAYNDKLQLEKRSEELRLQLEALKEEHQKLLQKRSNSSDVSQSGYTSEEVAVPMGPPSGQATTCKQAAAAVLGQRVNTSSPDLGIESDAGRISSVEVSNAQRAMLKTVEMKTEGSASPKAKSEESTSPDSKSNVATGAATVHDCAKVDLENAELRRKLIRTKRAFEDTYEKLRMANKAKAQVEKDIKNQILKTHNVLRNVRSNMENEL.

Residues 20–41 form a disordered region; sequence ASFDVPRPPGGGNSPLPSQGRS. The stretch at 97–516 forms a coiled coil; it reads RKTVDVKMEL…SSQEKEIKKL (420 aa). Over residues 517–530 the composition is skewed to basic and acidic residues; the sequence is NQENEQSANKENDC. The interval 517–554 is disordered; the sequence is NQENEQSANKENDCAKTVISPSSSGRSMSDNEASSQEM. The segment covering 535 to 554 has biased composition (polar residues); it reads ISPSSSGRSMSDNEASSQEM. The residue at position 545 (Ser545) is a Phosphoserine. Coiled-coil stretches lie at residues 626-654 and 712-983; these read EADL…KVDV and NSLL…LKLA. A Nuclear localization signal motif is present at residues 644–656; that stretch reads RNKLLQRKVDVLF. The residue at position 782 (Thr782) is a Phosphothreonine. Ser785 bears the Phosphoserine mark. A compositionally biased stretch (basic and acidic residues) spans 810 to 823; it reads KKELEKRRSSEGQR. 2 disordered regions span residues 810 to 849 and 863 to 893; these read KKEL…SEPD and SNSL…NRNS. The span at 831 to 843 shows a compositional bias: polar residues; that stretch reads LPSQQFDNQSESE. Residues Ser874, Ser876, Ser878, Ser1191, Ser1234, Ser1237, and Ser1239 each carry the phosphoserine modification. The interval 1220–1249 is disordered; that stretch reads VEMKTEGSASPKAKSEESTSPDSKSNVATG. The span at 1237–1247 shows a compositional bias: polar residues; sequence STSPDSKSNVA.

As to quaternary structure, monomer. As to expression, developing visceral mesoderm of the midgut, the central and peripheral nervous system, and developing gonads. Isoform J: Expressed in ovaries, testis and embryos. Isoform A: Expressed in testis only.

The protein localises to the cytoplasm. Its subcellular location is the cytoskeleton. It localises to the microtubule organizing center. It is found in the centrosome. The protein resides in the flagellum basal body. The protein localises to the perinuclear region. Core component of the centrosome throughout spermatogenesis. May participate in mitotic spindle assembly and the mechanics of morphogenesis through an interaction with microtubules, either directly or indirectly. Is a target of several homeotic genes. The sequence is that of Centrosomin (cnn) from Drosophila melanogaster (Fruit fly).